A 111-amino-acid chain; its full sequence is Secreted RxLR effector protein 82 (111 aa).

An N-terminal signal peptide occupies residues 1–17 (MFHLYLLLVFETRYTCL). A RxLR motif is present at residues 28–31 (RWLR).

Belongs to the RxLR effector family.

Its subcellular location is the secreted. The protein localises to the host nucleus. Functionally, secreted effector that acts as an elicitor that induces cell death in host plant cells. This is Secreted RxLR effector protein 82 from Plasmopara viticola (Downy mildew of grapevine).